Here is a 498-residue protein sequence, read N- to C-terminus: ATP synthase subunit beta, chloroplastic (498 aa).

172–179 (GGAGVGKT) lines the ATP pocket.

Belongs to the ATPase alpha/beta chains family. As to quaternary structure, F-type ATPases have 2 components, CF(1) - the catalytic core - and CF(0) - the membrane proton channel. CF(1) has five subunits: alpha(3), beta(3), gamma(1), delta(1), epsilon(1). CF(0) has four main subunits: a(1), b(1), b'(1) and c(9-12).

The protein resides in the plastid. Its subcellular location is the chloroplast thylakoid membrane. It carries out the reaction ATP + H2O + 4 H(+)(in) = ADP + phosphate + 5 H(+)(out). Functionally, produces ATP from ADP in the presence of a proton gradient across the membrane. The catalytic sites are hosted primarily by the beta subunits. This is ATP synthase subunit beta, chloroplastic from Platanus occidentalis (Sycamore).